The primary structure comprises 1186 residues: uncharacterized protein (1186 aa).

This is an uncharacterized protein from Acheta domesticus (House cricket).